We begin with the raw amino-acid sequence, 866 residues long: MNLPPNPVIARGRGRGRKPNNVEANRGFAPSLGQKSDPSHSEGNQASGGNGGGGDAQVGPSIEKSSLSAVQMHKSEGDPRGSVRGRRLITDLVYSRPPGMTSKKGVVGTHITVQANYFKVLKRPNWTIYQYRVDFTPDVEATRLRRSFLYEHKGILGGYIFDGTNMFCINQFKAVQDSPYVLELVTKSRAGENIEIKIKAVGSVQSTDAEQFQVLNLILRRAMEGLDLKLVSRYYYDPQAKINLENFRMQLWPGYQTSIRQHENDILLCSEICHKVMRTETLYNILSDAIRDSDDYQSTFKRAVMGMVILTDYNNKTYRIDDVDFQSTPLCKFKTNDGEISYVDYYKKRYNIIIRDLKQPLVMSRPTDKNIRGGNDQAIMIIPELARATGMTDAMRADFRTLRAMSEHTRLNPDRRIERLRMFNKRLKSCKQSVETLKSWNIELDSALVEIPARVLPPEKILFGNQKIFVCDARADWTNEFRTCSMFKNVHINRWYVITPSRNLRETQEFVQMCIRTASSMKMNICNPIYEEIPDDRNGTYSQAIDNAAANDPQIVMVVMRSPNEEKYSCIKKRTCVDRPVPSQVVTLKVIAPRQQKPTGLMSIATKVVIQMNAKLMGAPWQVVIPLHGLMTVGFDVCHSPKNKNKSYGAFVATMDQKESFRYFSTVNEHIKGQELSEQMSVNMACALRSYQEQHRSLPERILFFRDGVGDGQLYQVVNSEVNTLKDRLDEIYKSAGKQEGCRMTFIIVSKRINSRYFTGHRNPVPGTVVDDVITLPERYDFFLVSQAVRIGTVSPTSYNVISDNMGLNADKLQMLSYKMTHMYYNYSGTIRVPAVCHYAHKLAFLVAESINRAPSAGLQNQLYFL.

Methionine 1 carries the post-translational modification N-acetylmethionine. Positions 1–61 are disordered; sequence MNLPPNPVIA…GGGDAQVGPS (61 aa). Symmetric dimethylarginine occurs at positions 11, 13, 15, and 17. Residues 46–56 show a composition bias toward gly residues; that stretch reads ASGGNGGGGDA. The 110-residue stretch at 281–390 folds into the PAZ domain; the sequence is TLYNILSDAI…IIPELARATG (110 aa). Residues 555-852 form the Piwi domain; sequence IVMVVMRSPN…LAFLVAESIN (298 aa).

This sequence belongs to the argonaute family. Piwi subfamily. Component of the ping-pong piRNA processing (4P) complex consisting of krimp, aub and AGO3. Interacts (via N-terminus when symmetrically dimethylated on arginine residues) with krimp (via tudor domain); this interaction requires methylation of at least one N-terminal arginie residue. Interacts with vas and AGO3. May form part of a piRNA processing complex consisting of tud, aub and AGO3. Interacts (when symmetrically dimethylated on arginine residues) with tud; methylation and/or interaction requires association with piRNA. Interacts (via N-terminus and when associated with piRNA) with csul/PRMT5; the interaction recruits the PRMT5 methylosome complex to modify N-terminal arginines by symmetrical dimethylation but involves residues other than the arginines to be modified. Forms a complex with smg, twin, AGO3, nanos mRNA and piRNAs that targets the nanos 3'-untranslated region, in early embryos. Interacts with nanos mRNA and rump (in an RNA-dependent manner). Interacts with papi and vret. Interacts with me31B. In terms of processing, symmetrical dimethylation of arginines (sDMA) on Arg-11, Arg-13 and/or Arg-15 by csul/PRMT5/DART5, is required for binding to tud, localization to the pole plasm and association with the correct piRNAs. SDMA on Arg-11, Arg-13, Arg-15 and/or Arg-17 is required for binding to krimp and stable recruitment to subregions of the nuage. Methylation state does not affect protein stability. SDMA plays an important role in ping-pong amplification of piRNAs and is essential for function in vivo. Methylation state functions as an indicator of its piRNA binding state. PiRNA binding promotes sDMA modification; piRNA binding induces a conformational change that exposes the N-terminal arginines, making them available to the methylosome complex. Expressed in ovary. In the germarium, found in germline stem and cyst cells. In egg chambers from stage 6, expressed both in nurse cells and oocytes. In embryos, accumulates in the pole cells, although low expression is detected throughout the entire embryo. In testis, expressed in germline stem cells, gonialblast and spermatogonia cells (at protein level). In the adult brain, expressed in the ellipsoid body, the mushroom body subdivision in the peduncle and the cell body layer. Expressed specifically in alpha'/beta' and gamma neurons.

Its subcellular location is the cytoplasm. The protein localises to the cytosol. It localises to the perinuclear region. The protein resides in the cytoplasmic ribonucleoprotein granule. Functionally, component of the perinuclear meiotic nuage, a germline-specific subcellular membraneless ribonucleoprotein compartment involved in production of transposable element-repressing Piwi-interacting RNA (piRNA)-induced silencing complexes (piRISCs), which are essential for maintaining germline integrity during oogenesis; essential for the formation and/or structural integrity of nuage particles. Acts via the Piwi-interacting RNA (piRNA) metabolic process, which mediates the repression of transposable elements during meiosis by forming complexes composed of piRNAs and Piwi proteins and governs the methylation and subsequent repression of transposons. Directly binds piRNAs, a class of 24 to 30 nucleotide RNAs that are generated by a Dicer-independent mechanism and are primarily derived from transposons and other repeated sequence elements. Shows RNA cleavage or slicer activity; including aub-piRNA complexes from ovary and testis. When loaded with guide piRNAs recognizes and cleaves complementary RNAs to repress their expression and produce complementary piRNAs. Together with Piwi protein AGO3 recruited to subregions of the perinuclear nuage by krimp, which coordinates their activity in the ping-pong amplification step of secondary piRNA biogenesis. Krimp recruits piRNA bound aub and unbound AGO3, bringing them into close proximity to facilitate the loading onto AGO3 of freshly cut piRNAs generated by aub cleavage of target sequences; krimp recognizes the piRNA loading state of the Piwi proteins via symmetrically dimethylated arginine modification in their N-terminus. Important for asymmetric ping-pong amplification to bias production towards antisense piRNAs capable of silencing transposable elements. Required for the localization of mael and krimp to the meiotic nuage. In ovary, associates predominantly with antisense piRNAs that contain uridine at their 5' end. In testis, associates with Su(Ste) antisense piRNAs (most abundant class of piRNAs found in complex with aub in testes) and negatively regulates Ste expression, most likely by cleaving its transcripts. Also in testis, may repress translation of vas when associated with a piRNA derived from chromosome X, termed AT-chX-1, whose sequence shows strong complementarity to vas mRNA. Involved in repression of long interspersed nuclear elements (LINEs) including HeT-A, I-element and TART LINEs. Repression of specialized telomeric retroelements HeT-A and TART is involved in telomere regulation; Drosophila telomeres being maintained by transposition of specialized telomeric retroelements. Also involved in telomeric trans-silencing, a repression mechanism by which a transposon or a transgene inserted in subtelomeric heterochromatin has the capacity to repress in trans, in the female germline, a homologous transposon, or transgene located in euchromatin. Involved in the suppression of meiotic drive of sex chromosomes and autosomes. Involved in transposon silencing in the adult brain. Required for dorsal-ventral as well as anterior-posterior patterning of the egg. Required during oogenesis for primordial germ cell formation and activation of RNA interference. During early oogenesis, required for osk mRNA silencing and polarization of the microtubule cytoskeleton. During mid-oogenesis, required for osk mRNA localization to the posterior pole and efficient translation of osk and grk. During embryogenesis, required for posterior localization of nanos (nos) mRNA, independently of osk, and pole cell formation. Forms a complex with smg, twin, AGO3 and specific piRNAs that targets nanos mRNA (and probably other maternal mRNAS) for deadenylation promoting its decay during early embryogenesis. This is Protein aubergine from Drosophila melanogaster (Fruit fly).